Here is a 220-residue protein sequence, read N- to C-terminus: MAWSSSFLFIVLPLAAAVAVQPQDTELTFLLPAGRQECFYQTTLYNGSMEIEYQVIGGAGLDVDFSVTTPSGILLIMERRRSDGVHTVEPTEAGDYMICFDNSFSTISEKLVFFELIFDNQQGDEEPDSWADVVEPDELLDIKLEDIKESIESVKSRLERSIQMQTVLRAFEARDRNLQDSNLERVNFWSAINVGVLVTVAFLQVYMLKSLFDDKRKIRT.

The N-terminal stretch at 1-19 (MAWSSSFLFIVLPLAAAVA) is a signal peptide. Residues 20–187 (VQPQDTELTF…LQDSNLERVN (168 aa)) lie on the Extracellular side of the membrane. The 83-residue stretch at 36–118 (QECFYQTTLY…EKLVFFELIF (83 aa)) folds into the GOLD domain. Residues 138 to 164 (ELLDIKLEDIKESIESVKSRLERSIQM) adopt a coiled-coil conformation. The helical transmembrane segment at 188 to 208 (FWSAINVGVLVTVAFLQVYML) threads the bilayer. Topologically, residues 209-220 (KSLFDDKRKIRT) are cytoplasmic. The short motif at 211 to 212 (LF) is the COPII vesicle coat-binding element. The short motif at 211-220 (LFDDKRKIRT) is the COPI vesicle coat-binding element.

This sequence belongs to the EMP24/GP25L family. In terms of assembly, homodimer in endoplasmic reticulum, endoplasmic reticulum-Golgi intermediate compartment and cis-Golgi network. Interacts with IL1RL1. Interacts with RNF26; this interaction is important to modulate innate immune signaling through the cGAS-STING pathway.

It is found in the cell membrane. It localises to the endoplasmic reticulum membrane. The protein localises to the golgi apparatus. Its subcellular location is the cis-Golgi network membrane. The protein resides in the endoplasmic reticulum-Golgi intermediate compartment membrane. Its function is as follows. Potential role in vesicular protein trafficking, mainly in the early secretory pathway. May act as a cargo receptor at the lumenal side for incorporation of secretory cargo molecules into transport vesicles and may be involved in vesicle coat formation at the cytoplasmic side. Plays a positive role in IL-33-mediated IL-8 and IL-6 production by interacting with interleukin-33 receptor IL1RL1. Plays also a role in the modulation of innate immune signaling through the cGAS-STING pathway by interacting with RNF26. This is Transmembrane emp24 domain-containing protein 1 (tmed1) from Xenopus tropicalis (Western clawed frog).